Consider the following 61-residue polypeptide: Small ribosomal subunit protein uS14 (61 aa).

Residues Cys24, Cys27, Cys40, and Cys43 each coordinate Zn(2+).

It belongs to the universal ribosomal protein uS14 family. Zinc-binding uS14 subfamily. In terms of assembly, part of the 30S ribosomal subunit. Contacts proteins S3 and S10. The cofactor is Zn(2+).

Its function is as follows. Binds 16S rRNA, required for the assembly of 30S particles and may also be responsible for determining the conformation of the 16S rRNA at the A site. This is Small ribosomal subunit protein uS14 from Thermosipho africanus (strain TCF52B).